The primary structure comprises 328 residues: MQNQLNALLQSAKKSVADAQSEIVLEEIRVDYLGKKGKLTELLKSVGQMPADQRPLLGKAVNEIKREIQQLLNAKSTQLREKSLQEKLNKEKVDITLRGRYDHLGAIHPISRVSERVSQLFSMLGFQIAEGPEIENEYYNFEALNIPADHPARTMADTFYFSGDKLLRTHTSPVQIREMEKQGVPIRLIALGRVYRRDLDQTHTPMFHQVEGLVIDKRSTFANLKGLLQQFLNCFFEKDVRLRFRPSYFPFTEPSAEVDIYQPRTDKWLEVLGCGMVHPNVLRNLNIDPDEYSGFAFGIGLDRLAMLRYEVTDLRLFFENDLRFLGQF.

Glutamate 253 provides a ligand contact to Mg(2+).

It belongs to the class-II aminoacyl-tRNA synthetase family. Phe-tRNA synthetase alpha subunit type 1 subfamily. Tetramer of two alpha and two beta subunits. Mg(2+) serves as cofactor.

The protein localises to the cytoplasm. The catalysed reaction is tRNA(Phe) + L-phenylalanine + ATP = L-phenylalanyl-tRNA(Phe) + AMP + diphosphate + H(+). This chain is Phenylalanine--tRNA ligase alpha subunit, found in Coxiella burnetii (strain Dugway 5J108-111).